A 237-amino-acid chain; its full sequence is Uridylate kinase (237 aa).

9–12 (KLSG) contacts ATP. Position 51 (glycine 51) interacts with UMP. Residues glycine 52 and arginine 56 each contribute to the ATP site. Residues aspartate 71 and 132–139 (CGNPFFTT) contribute to the UMP site. ATP is bound by residues threonine 159, tyrosine 165, and aspartate 168.

Belongs to the UMP kinase family. Homohexamer.

It is found in the cytoplasm. The enzyme catalyses UMP + ATP = UDP + ADP. The protein operates within pyrimidine metabolism; CTP biosynthesis via de novo pathway; UDP from UMP (UMPK route): step 1/1. With respect to regulation, inhibited by UTP. Its function is as follows. Catalyzes the reversible phosphorylation of UMP to UDP. This is Uridylate kinase from Prochlorococcus marinus (strain MIT 9313).